The following is a 312-amino-acid chain: Glyoxylate/hydroxypyruvate reductase A (312 aa).

The active site involves arginine 227. Histidine 275 functions as the Proton donor in the catalytic mechanism.

This sequence belongs to the D-isomer specific 2-hydroxyacid dehydrogenase family. GhrA subfamily.

The protein resides in the cytoplasm. It catalyses the reaction glycolate + NADP(+) = glyoxylate + NADPH + H(+). It carries out the reaction (R)-glycerate + NAD(+) = 3-hydroxypyruvate + NADH + H(+). The enzyme catalyses (R)-glycerate + NADP(+) = 3-hydroxypyruvate + NADPH + H(+). In terms of biological role, catalyzes the NADPH-dependent reduction of glyoxylate and hydroxypyruvate into glycolate and glycerate, respectively. The polypeptide is Glyoxylate/hydroxypyruvate reductase A (Salmonella paratyphi C (strain RKS4594)).